We begin with the raw amino-acid sequence, 99 residues long: Transcription factor 1 (99 aa).

May be involved in preference for HM-URA DNA regions lie at residues 52 to 77 (PVAR…SVGV) and 90 to 99 (EGLKYEDFAK). DNA-binding regions lie at residues F61 and 93-94 (KY).

The protein belongs to the bacterial histone-like protein family. Homodimer.

Functionally, selectively binds to and inhibits the transcription of hydroxymethyluracil-(hmUra)-containing DNA, such as SP01 DNA, by RNA polymerase in vitro. The protein is Transcription factor 1 (TF1) of Bacillus phage SP01 (Bacteriophage SP01).